Reading from the N-terminus, the 175-residue chain is Alkyl hydroperoxide reductase AhpD (175 aa).

Residue cysteine 131 is the Proton donor of the active site. A disulfide bridge connects residues cysteine 131 and cysteine 134. Cysteine 134 acts as the Cysteine sulfenic acid (-SOH) intermediate in catalysis.

The protein belongs to the AhpD family.

The enzyme catalyses N(6)-[(R)-dihydrolipoyl]-L-lysyl-[lipoyl-carrier protein] + a hydroperoxide = N(6)-[(R)-lipoyl]-L-lysyl-[lipoyl-carrier protein] + an alcohol + H2O. Functionally, antioxidant protein with alkyl hydroperoxidase activity. Required for the reduction of the AhpC active site cysteine residues and for the regeneration of the AhpC enzyme activity. The sequence is that of Alkyl hydroperoxide reductase AhpD from Brucella canis (strain ATCC 23365 / NCTC 10854 / RM-666).